The primary structure comprises 298 residues: 4-hydroxy-tetrahydrodipicolinate synthase (298 aa).

A pyruvate-binding site is contributed by T51. Y139 functions as the Proton donor/acceptor in the catalytic mechanism. Catalysis depends on K167, which acts as the Schiff-base intermediate with substrate. Residue I209 coordinates pyruvate.

It belongs to the DapA family. As to quaternary structure, homotetramer; dimer of dimers.

It is found in the cytoplasm. It catalyses the reaction L-aspartate 4-semialdehyde + pyruvate = (2S,4S)-4-hydroxy-2,3,4,5-tetrahydrodipicolinate + H2O + H(+). It participates in amino-acid biosynthesis; L-lysine biosynthesis via DAP pathway; (S)-tetrahydrodipicolinate from L-aspartate: step 3/4. Its function is as follows. Catalyzes the condensation of (S)-aspartate-beta-semialdehyde [(S)-ASA] and pyruvate to 4-hydroxy-tetrahydrodipicolinate (HTPA). This Histophilus somni (strain 129Pt) (Haemophilus somnus) protein is 4-hydroxy-tetrahydrodipicolinate synthase.